A 608-amino-acid polypeptide reads, in one-letter code: Fatty acid amide hydrolase (608 aa).

Catalysis depends on charge relay system residues lysine 206 and serine 282. 303–306 (GGGS) provides a ligand contact to substrate. Serine 306 serves as the catalytic Acyl-ester intermediate.

This sequence belongs to the amidase family. Forms homodimers.

Its subcellular location is the endoplasmic reticulum membrane. It is found in the cell membrane. The enzyme catalyses N-(9Z,12Z-octadecadienoyl)-ethanolamine + H2O = ethanolamine + (9Z,12Z)-octadecadienoate. It catalyses the reaction N-hexadecanoylethanolamine + H2O = ethanolamine + hexadecanoate. The catalysed reaction is N-dodecanoylethanolamine + H2O = dodecanoate + ethanolamine. Its activity is regulated as follows. Inhibited by methyl arachidonyl fluorophosphonate (MAFP). Functionally, catalyzes the hydrolysis of bioactive endogenous fatty acid amides to their corresponding acids. The hydrolysis of endogenous amidated lipids terminates their participation as lipid mediators in various signaling systems. Converts a wide range of N-acylethanolamines (NAEs) to their corresponding free fatty acids and ethanolamine. In Oryza sativa subsp. indica (Rice), this protein is Fatty acid amide hydrolase.